The primary structure comprises 229 residues: Flagellar L-ring protein (229 aa).

An N-terminal signal peptide occupies residues 1–23 (MNPLTRVALAVAAFAALVLALSA). C24 carries N-palmitoyl cysteine lipidation. C24 carries S-diacylglycerol cysteine lipidation.

Belongs to the FlgH family. The basal body constitutes a major portion of the flagellar organelle and consists of four rings (L,P,S, and M) mounted on a central rod.

It is found in the cell outer membrane. The protein resides in the bacterial flagellum basal body. In terms of biological role, assembles around the rod to form the L-ring and probably protects the motor/basal body from shearing forces during rotation. The polypeptide is Flagellar L-ring protein (Anaeromyxobacter sp. (strain K)).